The following is a 337-amino-acid chain: DNA replication regulator sld2 (337 aa).

Thr60 and Thr74 each carry phosphothreonine; by cdc2. The tract at residues 71 to 97 is disordered; that stretch reads KFQTPTKQRAETEANESPKAPRNDYLQ. Phosphoserine; by cdc2 is present on Ser87. A phosphothreonine; by cdc2 mark is found at Thr99 and Thr154. The residue at position 183 (Ser183) is a Phosphoserine. The tract at residues 258 to 302 is disordered; sequence SMNLSKSHLEGLPEIDEDAENGIDDNEDTTASKDSSPFLDLQSER. A compositionally biased stretch (acidic residues) spans 270 to 285; sequence PEIDEDAENGIDDNED.

The protein belongs to the SLD2 family. In terms of assembly, interacts with rad4. Post-translationally, phosphorylated by cdc2 at the onset of S-phase.

It is found in the cytoplasm. The protein localises to the nucleus. Its function is as follows. Has a role in the initiation of DNA replication. Required at S-phase checkpoint. The chain is DNA replication regulator sld2 (drc1) from Schizosaccharomyces pombe (strain 972 / ATCC 24843) (Fission yeast).